The primary structure comprises 337 residues: MVVKVGINGFGRIGRIVFRNAIEHGEVNVVAVNDPFIETHYAAYMLKYDSTHGQFKGTIDVNSNGLTVNGKAVTFYQERDPASIPWGKHGVEYVVESTGVFTTTEKASAHLKGGAKKVIISAPSADAPMFVMGVNEKTYDPSVNVLSNASCTTNCLAPLAKVINDNFGLTEGLMTTIHSYTATQKTVDGPSSKDWRGGRTAAQNIIPSSTGAAKAVGKVIPSLNGKLTGMSMRVPTANVSVVDLTCKTEKPVTYDQIKQTIKKASEGELKGILGYSEDALVSSDLNGDSRSSIFDASAGIALNDHFIKLISWYDNEWGYSRRVVDLIAYIAKVDAGK.

Residues 12–13 (RI), aspartate 34, and arginine 79 contribute to the NAD(+) site. D-glyceraldehyde 3-phosphate contacts are provided by residues 150–152 (SCT), threonine 181, 210–211 (TG), and arginine 233. The active-site Nucleophile is cysteine 151. Residue asparagine 315 participates in NAD(+) binding.

The protein belongs to the glyceraldehyde-3-phosphate dehydrogenase family. Homotetramer.

The protein resides in the cytoplasm. The catalysed reaction is D-glyceraldehyde 3-phosphate + phosphate + NAD(+) = (2R)-3-phospho-glyceroyl phosphate + NADH + H(+). It functions in the pathway carbohydrate degradation; glycolysis; pyruvate from D-glyceraldehyde 3-phosphate: step 1/5. This chain is Glyceraldehyde-3-phosphate dehydrogenase (GPD), found in Ajellomyces capsulatus (Darling's disease fungus).